The sequence spans 79 residues: Small ribosomal subunit protein uS11 (79 aa).

A Phosphoserine modification is found at Ser14. Glycyl lysine isopeptide (Lys-Gly) (interchain with G-Cter in SUMO2) cross-links involve residues Lys59 and Lys61.

Belongs to the universal ribosomal protein uS11 family. As to quaternary structure, component of the small ribosomal subunit. Part of the small subunit (SSU) processome, composed of more than 70 proteins and the RNA chaperone small nucleolar RNA (snoRNA) U3.

The protein resides in the cytoplasm. It is found in the nucleus. It localises to the nucleolus. Functionally, component of the small ribosomal subunit. The ribosome is a large ribonucleoprotein complex responsible for the synthesis of proteins in the cell. Part of the small subunit (SSU) processome, first precursor of the small eukaryotic ribosomal subunit. During the assembly of the SSU processome in the nucleolus, many ribosome biogenesis factors, an RNA chaperone and ribosomal proteins associate with the nascent pre-rRNA and work in concert to generate RNA folding, modifications, rearrangements and cleavage as well as targeted degradation of pre-ribosomal RNA by the RNA exosome. This is Small ribosomal subunit protein uS11 (RPS14) from Sus scrofa (Pig).